The chain runs to 953 residues: 2-oxoglutarate dehydrogenase E1 component (953 aa).

This sequence belongs to the alpha-ketoglutarate dehydrogenase family. Homodimer. Part of the 2-oxoglutarate dehydrogenase (OGDH) complex composed of E1 (2-oxoglutarate dehydrogenase), E2 (dihydrolipoamide succinyltransferase) and E3 (dihydrolipoamide dehydrogenase); the complex contains multiple copies of the three enzymatic components (E1, E2 and E3). Thiamine diphosphate serves as cofactor.

The catalysed reaction is N(6)-[(R)-lipoyl]-L-lysyl-[protein] + 2-oxoglutarate + H(+) = N(6)-[(R)-S(8)-succinyldihydrolipoyl]-L-lysyl-[protein] + CO2. Its function is as follows. E1 component of the 2-oxoglutarate dehydrogenase (OGDH) complex which catalyzes the decarboxylation of 2-oxoglutarate, the first step in the conversion of 2-oxoglutarate to succinyl-CoA and CO(2). In Oceanobacillus iheyensis (strain DSM 14371 / CIP 107618 / JCM 11309 / KCTC 3954 / HTE831), this protein is 2-oxoglutarate dehydrogenase E1 component.